Consider the following 314-residue polypeptide: MTSIESHPEQYWAAAGRPGPVPLALGPVHPGGPTLIDLLMALFGLSTNADLGGANADIEGDDTDRRAHAADAARKFSANEANAAEQMQGVGAQGMAQMASGIGGALSGALGGVMGPLTQLPQQAMQAGQGAMQPLMSAMQQAQGADGLAAVDGARLLDSIGGEPGLGSGAGGGDVGGGGAGGTTPTGYLGPPPVPTSSPPTTPAGAPTKSATMPPPGGASPASAHMGAAGMPMVPPGAMGARGEGSGQEKPVEKRVTAPAVPNGQPVKGRLTVPPSAPTTKPTDGKPVVRRRILLPEHKDFGRIAPDEKTDAGE.

2 helical membrane-spanning segments follow: residues 23–43 and 98–118; these read LALG…MALF and MASG…GPLT. Over residues 165-184 the composition is skewed to gly residues; that stretch reads GLGSGAGGGDVGGGGAGGTT. Residues 165 to 314 form a disordered region; sequence GLGSGAGGGD…APDEKTDAGE (150 aa). Pro residues predominate over residues 190-202; sequence GPPPVPTSSPPTT. Composition is skewed to low complexity over residues 203 to 212 and 219 to 232; these read PAGAPTKSAT and ASPA…AGMP. A helical membrane pass occupies residues 221–241; sequence PASAHMGAAGMPMVPPGAMGA. The span at 294–314 shows a compositional bias: basic and acidic residues; it reads LLPEHKDFGRIAPDEKTDAGE.

It is found in the cell membrane. This is an uncharacterized protein from Mycobacterium tuberculosis (strain CDC 1551 / Oshkosh).